Reading from the N-terminus, the 131-residue chain is Small ribosomal subunit protein bS6 (131 aa).

The interval 100–131 is disordered; it reads SPMVKAKDERRSRDYSLEDANMDAEEAGDSEE. A compositionally biased stretch (basic and acidic residues) spans 104-115; that stretch reads KAKDERRSRDYS. Residues 119-131 show a composition bias toward acidic residues; that stretch reads ANMDAEEAGDSEE.

This sequence belongs to the bacterial ribosomal protein bS6 family.

In terms of biological role, binds together with bS18 to 16S ribosomal RNA. In Photorhabdus laumondii subsp. laumondii (strain DSM 15139 / CIP 105565 / TT01) (Photorhabdus luminescens subsp. laumondii), this protein is Small ribosomal subunit protein bS6.